Reading from the N-terminus, the 675-residue chain is Protein kintoun (675 aa).

4 disordered regions span residues 98–131, 265–293, 310–340, and 509–659; these read ASKK…KQGA, AGEG…TAPP, EGGA…AVAK, and EAAH…AAPT. Positions 102–113 are enriched in basic and acidic residues; sequence QQQEQEKQEKEQ. Residues 279-293 show a composition bias toward low complexity; it reads VPGVPDLPGAKTAPP. Positions 529–543 are enriched in low complexity; it reads AAAASSGAAPAPAAA. Positions 544-553 are enriched in acidic residues; the sequence is SEEEEEEDKE. Positions 564–577 are enriched in low complexity; the sequence is DPAAAAAAAGASSG. Residues 579–596 show a composition bias toward basic and acidic residues; it reads ELTENERKWRELHARQQQ. Composition is skewed to low complexity over residues 604 to 617 and 628 to 659; these read AAEA…AAAE and VAQG…AAPT.

This sequence belongs to the PIH1 family. Kintoun subfamily.

The protein localises to the cytoplasm. Required for cytoplasmic pre-assembly of axonemal dyneins, thereby playing a central role in motility in cilia and flagella. Involved in pre-assembly of dynein arm complexes in the cytoplasm before intraflagellar transport loads them for the ciliary compartment. This is Protein kintoun (pf13) from Chlamydomonas reinhardtii (Chlamydomonas smithii).